We begin with the raw amino-acid sequence, 279 residues long: Acetyl-coenzyme A carboxylase carboxyl transferase subunit beta (279 aa).

Residues 23–279 (LWWKCESCGA…LSQILGHLSS (257 aa)) enclose the CoA carboxyltransferase N-terminal domain. Residues C27, C30, C46, and C49 each contribute to the Zn(2+) site. The segment at 27 to 49 (CESCGAMLHKKQVEDHFYTCCEC) adopts a C4-type zinc-finger fold.

It belongs to the AccD/PCCB family. In terms of assembly, acetyl-CoA carboxylase is a heterohexamer composed of biotin carboxyl carrier protein (AccB), biotin carboxylase (AccC) and two subunits each of ACCase subunit alpha (AccA) and ACCase subunit beta (AccD). It depends on Zn(2+) as a cofactor.

The protein resides in the cytoplasm. It catalyses the reaction N(6)-carboxybiotinyl-L-lysyl-[protein] + acetyl-CoA = N(6)-biotinyl-L-lysyl-[protein] + malonyl-CoA. Its pathway is lipid metabolism; malonyl-CoA biosynthesis; malonyl-CoA from acetyl-CoA: step 1/1. In terms of biological role, component of the acetyl coenzyme A carboxylase (ACC) complex. Biotin carboxylase (BC) catalyzes the carboxylation of biotin on its carrier protein (BCCP) and then the CO(2) group is transferred by the transcarboxylase to acetyl-CoA to form malonyl-CoA. This Prosthecochloris aestuarii (strain DSM 271 / SK 413) protein is Acetyl-coenzyme A carboxylase carboxyl transferase subunit beta.